The sequence spans 295 residues: Ribosomal RNA small subunit methyltransferase A (295 aa).

Residues Asn33, Val35, Gly60, Glu81, Asp111, and Asn129 each contribute to the S-adenosyl-L-methionine site.

It belongs to the class I-like SAM-binding methyltransferase superfamily. rRNA adenine N(6)-methyltransferase family. RsmA subfamily.

Its subcellular location is the cytoplasm. It carries out the reaction adenosine(1518)/adenosine(1519) in 16S rRNA + 4 S-adenosyl-L-methionine = N(6)-dimethyladenosine(1518)/N(6)-dimethyladenosine(1519) in 16S rRNA + 4 S-adenosyl-L-homocysteine + 4 H(+). In terms of biological role, specifically dimethylates two adjacent adenosines (A1518 and A1519) in the loop of a conserved hairpin near the 3'-end of 16S rRNA in the 30S particle. May play a critical role in biogenesis of 30S subunits. This is Ribosomal RNA small subunit methyltransferase A from Corynebacterium diphtheriae (strain ATCC 700971 / NCTC 13129 / Biotype gravis).